The following is a 128-amino-acid chain: Saitohin (128 aa).

The segment at 77-128 (SYSSEESSRNGAEQGRQLSIEGPFQGQNCPSHPAAALPLPMRGESQATSCQV) is disordered.

In terms of assembly, interacts with PRDX6.

Its subcellular location is the cytoplasm. The protein localises to the nucleus. This Gorilla gorilla gorilla (Western lowland gorilla) protein is Saitohin (STH).